The primary structure comprises 392 residues: Cellobiose 2-epimerase (392 aa).

This sequence belongs to the cellobiose 2-epimerase family.

The enzyme catalyses D-cellobiose = beta-D-glucosyl-(1-&gt;4)-D-mannopyranose. Catalyzes the reversible epimerization of cellobiose to 4-O-beta-D-glucopyranosyl-D-mannose (Glc-Man). Can also epimerize cellotriose to Glc-Glc-Man, cellotetraose to Glc-Glc-Glc-Man, lactose to epilactose, and mannobiose to 4-O-beta-D-mannopyranosyl-D-glucopyranose (Man-Glc). May function as a mannobiose 2-epimerase in vivo and be involved in a mannan catabolic pathway which feeds into glycolysis. The protein is Cellobiose 2-epimerase (bfce) of Bacteroides fragilis (strain ATCC 25285 / DSM 2151 / CCUG 4856 / JCM 11019 / LMG 10263 / NCTC 9343 / Onslow / VPI 2553 / EN-2).